Consider the following 1059-residue polypeptide: Carbamoyl phosphate synthase large chain (1059 aa).

Residues 1 to 401 (MPKRQDISKI…AMLKAVRSLE (401 aa)) are carboxyphosphate synthetic domain. The ATP site is built by arginine 129, arginine 169, glycine 175, glycine 176, arginine 208, isoleucine 210, glutamate 215, glycine 241, isoleucine 242, histidine 243, glutamine 284, and glutamate 298. Residues 133-327 (KALMERLNEP…IAKMAAKIAV (195 aa)) enclose the ATP-grasp 1 domain. Residues glutamine 284, glutamate 298, and asparagine 300 each coordinate Mg(2+). Glutamine 284, glutamate 298, and asparagine 300 together coordinate Mn(2+). The interval 402–546 (IGAIGLDDIT…YATYEQENES (145 aa)) is oligomerization domain. The interval 547–929 (IISTKKSVLV…ALYKAFIASN (383 aa)) is carbamoyl phosphate synthetic domain. Residues 671-861 (DQVIKELALP…LAQLATRVML (191 aa)) form the ATP-grasp 2 domain. ATP-binding residues include arginine 707, serine 746, leucine 748, glutamate 752, glycine 777, valine 778, histidine 779, serine 780, glutamine 820, and glutamate 832. Glutamine 820, glutamate 832, and asparagine 834 together coordinate Mg(2+). Residues glutamine 820, glutamate 832, and asparagine 834 each coordinate Mn(2+). The region spanning 930–1059 (IKVPRYGNVL…SRSFTVKEMH (130 aa)) is the MGS-like domain. The segment at 930–1059 (IKVPRYGNVL…SRSFTVKEMH (130 aa)) is allosteric domain.

This sequence belongs to the CarB family. As to quaternary structure, composed of two chains; the small (or glutamine) chain promotes the hydrolysis of glutamine to ammonia, which is used by the large (or ammonia) chain to synthesize carbamoyl phosphate. Tetramer of heterodimers (alpha,beta)4. Mg(2+) is required as a cofactor. Requires Mn(2+) as cofactor.

It catalyses the reaction hydrogencarbonate + L-glutamine + 2 ATP + H2O = carbamoyl phosphate + L-glutamate + 2 ADP + phosphate + 2 H(+). It carries out the reaction hydrogencarbonate + NH4(+) + 2 ATP = carbamoyl phosphate + 2 ADP + phosphate + 2 H(+). The protein operates within amino-acid biosynthesis; L-arginine biosynthesis; carbamoyl phosphate from bicarbonate: step 1/1. It functions in the pathway pyrimidine metabolism; UMP biosynthesis via de novo pathway; (S)-dihydroorotate from bicarbonate: step 1/3. Functionally, large subunit of the glutamine-dependent carbamoyl phosphate synthetase (CPSase). CPSase catalyzes the formation of carbamoyl phosphate from the ammonia moiety of glutamine, carbonate, and phosphate donated by ATP, constituting the first step of 2 biosynthetic pathways, one leading to arginine and/or urea and the other to pyrimidine nucleotides. The large subunit (synthetase) binds the substrates ammonia (free or transferred from glutamine from the small subunit), hydrogencarbonate and ATP and carries out an ATP-coupled ligase reaction, activating hydrogencarbonate by forming carboxy phosphate which reacts with ammonia to form carbamoyl phosphate. The polypeptide is Carbamoyl phosphate synthase large chain (Leuconostoc mesenteroides subsp. mesenteroides (strain ATCC 8293 / DSM 20343 / BCRC 11652 / CCM 1803 / JCM 6124 / NCDO 523 / NBRC 100496 / NCIMB 8023 / NCTC 12954 / NRRL B-1118 / 37Y)).